Consider the following 193-residue polypeptide: Ancillary SecYEG translocon subunit (193 aa).

At 1 to 11 (MIKNSYINEKL) the chain is on the cytoplasmic side. Residues 12-34 (NFYQKSFLTCMLLIVIVIVYFFS) traverse the membrane as a helical segment. The Extracellular portion of the chain corresponds to 35 to 193 (KNYLDKPKNS…IIQMKINNYN (159 aa)).

This sequence belongs to the YfgM family. Interacts with the Sec translocon. Forms a complex with PpiD.

Its subcellular location is the cell membrane. Its function is as follows. May mediate protein transfer from the Sec translocon to the chaperone network via its extracellular C-terminal region. This Buchnera aphidicola subsp. Baizongia pistaciae (strain Bp) protein is Ancillary SecYEG translocon subunit.